Reading from the N-terminus, the 1247-residue chain is Respiratory nitrate reductase 1 alpha chain (1247 aa).

A 4Fe-4S Mo/W bis-MGD-type domain is found at 43 to 107 (DKIVRSTHGV…SYSWYLYSAN (65 aa)). The [4Fe-4S] cluster site is built by H50, C54, C58, and C93. D223 lines the Mo-bis(molybdopterin guanine dinucleotide) pocket.

The protein belongs to the prokaryotic molybdopterin-containing oxidoreductase family. In terms of assembly, dimer of heterotrimers each composed of an alpha, a beta and a gamma chain. Alpha and beta are catalytic chains; gamma chains are involved in binding the enzyme complex to the cytoplasmic membrane. Interacts with the NarJ chaperone. Requires [4Fe-4S] cluster as cofactor. The cofactor is Mo-bis(molybdopterin guanine dinucleotide).

The protein localises to the cell membrane. The enzyme catalyses nitrate + a quinol = a quinone + nitrite + H2O. The nitrate reductase enzyme complex allows E.coli to use nitrate as an electron acceptor during anaerobic growth. The alpha chain is the actual site of nitrate reduction. In Escherichia coli (strain K12), this protein is Respiratory nitrate reductase 1 alpha chain (narG).